Here is a 186-residue protein sequence, read N- to C-terminus: Large ribosomal subunit protein uL5 (186 aa).

This sequence belongs to the universal ribosomal protein uL5 family. In terms of assembly, part of the 50S ribosomal subunit; part of the 5S rRNA/L5/L18/L25 subcomplex. Contacts the 5S rRNA and the P site tRNA. Forms a bridge to the 30S subunit in the 70S ribosome.

Functionally, this is one of the proteins that bind and probably mediate the attachment of the 5S RNA into the large ribosomal subunit, where it forms part of the central protuberance. In the 70S ribosome it contacts protein S13 of the 30S subunit (bridge B1b), connecting the 2 subunits; this bridge is implicated in subunit movement. Contacts the P site tRNA; the 5S rRNA and some of its associated proteins might help stabilize positioning of ribosome-bound tRNAs. This Cereibacter sphaeroides (strain ATCC 17023 / DSM 158 / JCM 6121 / CCUG 31486 / LMG 2827 / NBRC 12203 / NCIMB 8253 / ATH 2.4.1.) (Rhodobacter sphaeroides) protein is Large ribosomal subunit protein uL5.